A 429-amino-acid chain; its full sequence is MSKSLQAIRGMNDILPEQTPLWRHFEGTVSRLLDNYGYRQIRMPIVEFTELFKRSIGEVTDIVEKEMYTFADRNGDSLTLRPEGTAACVRAVLEHGITGGGQVQKLWYIGPMFRHERPQKGRYRQFHQIGVEVFNLDGPDIDAELIVMTWRLWGMLGIRNAVKLELNSLGTSEARARYRDALVEFLSARLDQLDEDNQRRLKTNPLRVLDTKHPETQAVLVDAPKLADYLDDESRVHFEGLKARLDAAGIPYVINPKLVRGLDYYSKTVFEWVTDQLGAQGTVCAGGRYDGLVEQMGGKPTTGVGFAMGIERLVLLLETLGQVPEEIARQVDVYLCAFGEAAELAALALTEKVRDQLPSLRLQVNAGAGSFKSQFKKADKSGALYALILGEEELAAKVIGVKPLRGQGEQQNIAWDALSEHLASCVVQG.

Belongs to the class-II aminoacyl-tRNA synthetase family. As to quaternary structure, homodimer.

It localises to the cytoplasm. The enzyme catalyses tRNA(His) + L-histidine + ATP = L-histidyl-tRNA(His) + AMP + diphosphate + H(+). This is Histidine--tRNA ligase from Pseudomonas savastanoi pv. phaseolicola (strain 1448A / Race 6) (Pseudomonas syringae pv. phaseolicola (strain 1448A / Race 6)).